The sequence spans 456 residues: Esterase MT1326 (456 aa).

LysM domains follow at residues 3-50 (STHA…RLIM), 54-101 (TRYT…RLIM), and 105-152 (TRYT…VLVI). Residues Ser-294, Asp-391, and His-425 contribute to the active site.

It belongs to the AB hydrolase superfamily.

It is found in the secreted. Its subcellular location is the cell wall. It catalyses the reaction a fatty acid ester + H2O = an aliphatic alcohol + a fatty acid + H(+). In terms of biological role, exhibits lipolytic activity with medium chain length esters as optimum substrates. In Mycobacterium tuberculosis (strain CDC 1551 / Oshkosh), this protein is Esterase MT1326.